Consider the following 110-residue polypeptide: Insulin (110 aa).

The first 24 residues, 1-24, serve as a signal peptide directing secretion; sequence MALWMRLLPLLALLALWAPAPTRA. Intrachain disulfides connect C31-C96, C43-C109, and C95-C100. A propeptide spans 57–87 (c peptide); the sequence is EVEDLQVRDVELAGAPGEGGLQPLALEGALQ.

Belongs to the insulin family. In terms of assembly, heterodimer of a B chain and an A chain linked by two disulfide bonds.

Its subcellular location is the secreted. Functionally, insulin decreases blood glucose concentration. It increases cell permeability to monosaccharides, amino acids and fatty acids. It accelerates glycolysis, the pentose phosphate cycle, and glycogen synthesis in liver. The polypeptide is Insulin (INS) (Canis lupus familiaris (Dog)).